The sequence spans 1360 residues: DNA-directed RNA polymerase subunit beta (1360 aa).

Belongs to the RNA polymerase beta chain family. As to quaternary structure, the RNAP catalytic core consists of 2 alpha, 1 beta, 1 beta' and 1 omega subunit. When a sigma factor is associated with the core the holoenzyme is formed, which can initiate transcription.

It carries out the reaction RNA(n) + a ribonucleoside 5'-triphosphate = RNA(n+1) + diphosphate. In terms of biological role, DNA-dependent RNA polymerase catalyzes the transcription of DNA into RNA using the four ribonucleoside triphosphates as substrates. The protein is DNA-directed RNA polymerase subunit beta of Ruthia magnifica subsp. Calyptogena magnifica.